Here is a 204-residue protein sequence, read N- to C-terminus: Putative AgrB-like protein (204 aa).

The next 4 membrane-spanning stretches (helical) occupy residues 40-60, 87-107, 111-131, and 156-176; these read IILINVMKFAIVYGISLATGL, LNCTLISLAMFVLAPFVFQNI, NWIVLGTFAFILLNMFLFAPA, and LILTGIALLIPFAEMKTLIMV.

The protein belongs to the AgrB family.

The protein localises to the cell membrane. Functionally, may be involved in the proteolytic processing of a quorum sensing system signal molecule precursor. The sequence is that of Putative AgrB-like protein from Listeria welshimeri serovar 6b (strain ATCC 35897 / DSM 20650 / CCUG 15529 / CIP 8149 / NCTC 11857 / SLCC 5334 / V8).